Consider the following 430-residue polypeptide: Adenylosuccinate synthetase (430 aa).

GTP is bound by residues 12–18 and 40–42; these read GDEGKGK and GHT. The active-site Proton acceptor is Asp-13. Residues Asp-13 and Gly-40 each coordinate Mg(2+). Residues 13-16, 38-41, Thr-128, Arg-142, Gln-223, Thr-238, and Arg-302 contribute to the IMP site; these read DEGK and NAGH. Residue His-41 is the Proton donor of the active site. 298–304 is a substrate binding site; that stretch reads TTTGRPR. GTP-binding positions include Arg-304, 330–332, and 412–414; these read SID and SVG.

It belongs to the adenylosuccinate synthetase family. Homodimer. Requires Mg(2+) as cofactor.

The protein localises to the cytoplasm. It carries out the reaction IMP + L-aspartate + GTP = N(6)-(1,2-dicarboxyethyl)-AMP + GDP + phosphate + 2 H(+). It functions in the pathway purine metabolism; AMP biosynthesis via de novo pathway; AMP from IMP: step 1/2. Its function is as follows. Plays an important role in the de novo pathway of purine nucleotide biosynthesis. Catalyzes the first committed step in the biosynthesis of AMP from IMP. This Bacillus licheniformis (strain ATCC 14580 / DSM 13 / JCM 2505 / CCUG 7422 / NBRC 12200 / NCIMB 9375 / NCTC 10341 / NRRL NRS-1264 / Gibson 46) protein is Adenylosuccinate synthetase.